The primary structure comprises 147 residues: Deoxyuridine 5'-triphosphate nucleotidohydrolase (147 aa).

R24 is a binding site for Mg(2+). Residues 68–70, 82–85, Y88, G93, I95, and R111 each bind dUTP; these read PRS and GVID.

Belongs to the dUTPase family. The cofactor is Mg(2+).

The catalysed reaction is dUTP + H2O = dUMP + diphosphate + H(+). This enzyme is involved in nucleotide metabolism: it produces dUMP, the immediate precursor of thymidine nucleotides and it decreases the intracellular concentration of dUTP so that uracil cannot be incorporated into DNA. In Homo sapiens (Human), this protein is Deoxyuridine 5'-triphosphate nucleotidohydrolase (OPG046).